The following is a 383-amino-acid chain: Sulfate adenylyltransferase (383 aa).

It belongs to the sulfate adenylyltransferase family.

The catalysed reaction is sulfate + ATP + H(+) = adenosine 5'-phosphosulfate + diphosphate. It functions in the pathway sulfur metabolism; hydrogen sulfide biosynthesis; sulfite from sulfate: step 1/3. The sequence is that of Sulfate adenylyltransferase (sat) from Aeropyrum pernix (strain ATCC 700893 / DSM 11879 / JCM 9820 / NBRC 100138 / K1).